A 397-amino-acid polypeptide reads, in one-letter code: Dual-specificity RNA methyltransferase RlmN (397 aa).

E130 functions as the Proton acceptor in the catalytic mechanism. Positions 138-377 constitute a Radical SAM core domain; the sequence is VEDRGAVCIS…ASPIRTPRGR (240 aa). A disulfide bond links C145 and C383. Positions 152, 156, and 159 each coordinate [4Fe-4S] cluster. S-adenosyl-L-methionine contacts are provided by residues 209-210, S241, 263-265, and N340; these read GE and SLH. Residue C383 is the S-methylcysteine intermediate of the active site.

This sequence belongs to the radical SAM superfamily. RlmN family. Requires [4Fe-4S] cluster as cofactor.

It is found in the cytoplasm. It carries out the reaction adenosine(2503) in 23S rRNA + 2 reduced [2Fe-2S]-[ferredoxin] + 2 S-adenosyl-L-methionine = 2-methyladenosine(2503) in 23S rRNA + 5'-deoxyadenosine + L-methionine + 2 oxidized [2Fe-2S]-[ferredoxin] + S-adenosyl-L-homocysteine. The catalysed reaction is adenosine(37) in tRNA + 2 reduced [2Fe-2S]-[ferredoxin] + 2 S-adenosyl-L-methionine = 2-methyladenosine(37) in tRNA + 5'-deoxyadenosine + L-methionine + 2 oxidized [2Fe-2S]-[ferredoxin] + S-adenosyl-L-homocysteine. In terms of biological role, specifically methylates position 2 of adenine 2503 in 23S rRNA and position 2 of adenine 37 in tRNAs. m2A2503 modification seems to play a crucial role in the proofreading step occurring at the peptidyl transferase center and thus would serve to optimize ribosomal fidelity. The polypeptide is Dual-specificity RNA methyltransferase RlmN (Granulibacter bethesdensis (strain ATCC BAA-1260 / CGDNIH1)).